We begin with the raw amino-acid sequence, 317 residues long: Acetyl-coenzyme A carboxylase carboxyl transferase subunit alpha (317 aa).

The region spanning 33-294 is the CoA carboxyltransferase C-terminal domain; that stretch reads NLDDEIARLQ…KQRLLEDLAD (262 aa).

Belongs to the AccA family. As to quaternary structure, acetyl-CoA carboxylase is a heterohexamer composed of biotin carboxyl carrier protein (AccB), biotin carboxylase (AccC) and two subunits each of ACCase subunit alpha (AccA) and ACCase subunit beta (AccD).

Its subcellular location is the cytoplasm. It catalyses the reaction N(6)-carboxybiotinyl-L-lysyl-[protein] + acetyl-CoA = N(6)-biotinyl-L-lysyl-[protein] + malonyl-CoA. It participates in lipid metabolism; malonyl-CoA biosynthesis; malonyl-CoA from acetyl-CoA: step 1/1. Component of the acetyl coenzyme A carboxylase (ACC) complex. First, biotin carboxylase catalyzes the carboxylation of biotin on its carrier protein (BCCP) and then the CO(2) group is transferred by the carboxyltransferase to acetyl-CoA to form malonyl-CoA. In Glaesserella parasuis serovar 5 (strain SH0165) (Haemophilus parasuis), this protein is Acetyl-coenzyme A carboxylase carboxyl transferase subunit alpha.